A 420-amino-acid chain; its full sequence is 3-isopropylmalate dehydratase large subunit (420 aa).

Positions 300, 361, and 364 each coordinate [4Fe-4S] cluster.

It belongs to the aconitase/IPM isomerase family. LeuC type 2 subfamily. In terms of assembly, heterodimer of LeuC and LeuD. Requires [4Fe-4S] cluster as cofactor.

It catalyses the reaction (2R,3S)-3-isopropylmalate = (2S)-2-isopropylmalate. It functions in the pathway amino-acid biosynthesis; L-leucine biosynthesis; L-leucine from 3-methyl-2-oxobutanoate: step 2/4. Functionally, catalyzes the isomerization between 2-isopropylmalate and 3-isopropylmalate, via the formation of 2-isopropylmaleate. In Endomicrobium trichonymphae, this protein is 3-isopropylmalate dehydratase large subunit.